Consider the following 154-residue polypeptide: Probable deoxyuridine 5'-triphosphate nucleotidohydrolase (154 aa).

It belongs to the dCTP deaminase family. Archaeal dUTPase subfamily.

The catalysed reaction is dUTP + H2O = dUMP + diphosphate + H(+). It participates in pyrimidine metabolism; dUMP biosynthesis; dUMP from dCTP (dUTP route): step 2/2. In terms of biological role, this enzyme is involved in nucleotide metabolism: it produces dUMP, the immediate precursor of thymidine nucleotides and it decreases the intracellular concentration of dUTP so that uracil cannot be incorporated into DNA. In Methanopyrus kandleri (strain AV19 / DSM 6324 / JCM 9639 / NBRC 100938), this protein is Probable deoxyuridine 5'-triphosphate nucleotidohydrolase.